A 100-amino-acid polypeptide reads, in one-letter code: NADH-quinone oxidoreductase subunit K (100 aa).

The next 3 helical transmembrane spans lie at 1–21, 28–48, and 64–84; these read MIGL…GLAG, ILLL…GFVA, and FIIA…ILWF.

It belongs to the complex I subunit 4L family. As to quaternary structure, NDH-1 is composed of 14 different subunits. Subunits NuoA, H, J, K, L, M, N constitute the membrane sector of the complex.

The protein resides in the cell inner membrane. It carries out the reaction a quinone + NADH + 5 H(+)(in) = a quinol + NAD(+) + 4 H(+)(out). In terms of biological role, NDH-1 shuttles electrons from NADH, via FMN and iron-sulfur (Fe-S) centers, to quinones in the respiratory chain. The immediate electron acceptor for the enzyme in this species is believed to be ubiquinone. Couples the redox reaction to proton translocation (for every two electrons transferred, four hydrogen ions are translocated across the cytoplasmic membrane), and thus conserves the redox energy in a proton gradient. The sequence is that of NADH-quinone oxidoreductase subunit K from Helicobacter pylori (strain B38).